Consider the following 419-residue polypeptide: Multifunctional CCA protein (419 aa).

ATP contacts are provided by glycine 8 and arginine 11. 2 residues coordinate CTP: glycine 8 and arginine 11. The Mg(2+) site is built by aspartate 21 and aspartate 23. 3 residues coordinate ATP: arginine 91, arginine 141, and arginine 144. CTP contacts are provided by arginine 91, arginine 141, and arginine 144. The HD domain occupies 230-331 (TGVHVMMVLD…VRLLERCDAL (102 aa)).

Belongs to the tRNA nucleotidyltransferase/poly(A) polymerase family. Bacterial CCA-adding enzyme type 1 subfamily. Monomer. Can also form homodimers and oligomers. Mg(2+) is required as a cofactor. Ni(2+) serves as cofactor.

The enzyme catalyses a tRNA precursor + 2 CTP + ATP = a tRNA with a 3' CCA end + 3 diphosphate. It catalyses the reaction a tRNA with a 3' CCA end + 2 CTP + ATP = a tRNA with a 3' CCACCA end + 3 diphosphate. Catalyzes the addition and repair of the essential 3'-terminal CCA sequence in tRNAs without using a nucleic acid template. Adds these three nucleotides in the order of C, C, and A to the tRNA nucleotide-73, using CTP and ATP as substrates and producing inorganic pyrophosphate. tRNA 3'-terminal CCA addition is required both for tRNA processing and repair. Also involved in tRNA surveillance by mediating tandem CCA addition to generate a CCACCA at the 3' terminus of unstable tRNAs. While stable tRNAs receive only 3'-terminal CCA, unstable tRNAs are marked with CCACCA and rapidly degraded. The protein is Multifunctional CCA protein of Paracidovorax citrulli (strain AAC00-1) (Acidovorax citrulli).